Reading from the N-terminus, the 296-residue chain is Nucleotide-binding protein SEQ_0857 (296 aa).

Position 13–20 (13–20) interacts with ATP; it reads GMSGAGKT. A GTP-binding site is contributed by 63-66; it reads DMRS.

The protein belongs to the RapZ-like family.

In terms of biological role, displays ATPase and GTPase activities. The sequence is that of Nucleotide-binding protein SEQ_0857 from Streptococcus equi subsp. equi (strain 4047).